Here is a 183-residue protein sequence, read N- to C-terminus: Adenine phosphoribosyltransferase (183 aa).

The protein belongs to the purine/pyrimidine phosphoribosyltransferase family. In terms of assembly, homodimer.

It localises to the cytoplasm. The catalysed reaction is AMP + diphosphate = 5-phospho-alpha-D-ribose 1-diphosphate + adenine. It participates in purine metabolism; AMP biosynthesis via salvage pathway; AMP from adenine: step 1/1. Its function is as follows. Catalyzes a salvage reaction resulting in the formation of AMP, that is energically less costly than de novo synthesis. The protein is Adenine phosphoribosyltransferase of Salmonella paratyphi C (strain RKS4594).